A 460-amino-acid polypeptide reads, in one-letter code: Argininosuccinate lyase (460 aa).

Belongs to the lyase 1 family. Argininosuccinate lyase subfamily.

It is found in the cytoplasm. It carries out the reaction 2-(N(omega)-L-arginino)succinate = fumarate + L-arginine. Its pathway is amino-acid biosynthesis; L-arginine biosynthesis; L-arginine from L-ornithine and carbamoyl phosphate: step 3/3. The sequence is that of Argininosuccinate lyase from Maridesulfovibrio salexigens (strain ATCC 14822 / DSM 2638 / NCIMB 8403 / VKM B-1763) (Desulfovibrio salexigens).